Here is a 411-residue protein sequence, read N- to C-terminus: Serine hydroxymethyltransferase (411 aa).

(6S)-5,6,7,8-tetrahydrofolate is bound by residues Leu117 and 121 to 123 (GHL). Residue Lys226 is modified to N6-(pyridoxal phosphate)lysine.

It belongs to the SHMT family. Homodimer. The cofactor is pyridoxal 5'-phosphate.

Its subcellular location is the cytoplasm. The catalysed reaction is (6R)-5,10-methylene-5,6,7,8-tetrahydrofolate + glycine + H2O = (6S)-5,6,7,8-tetrahydrofolate + L-serine. Its pathway is one-carbon metabolism; tetrahydrofolate interconversion. The protein operates within amino-acid biosynthesis; glycine biosynthesis; glycine from L-serine: step 1/1. Its function is as follows. Catalyzes the reversible interconversion of serine and glycine with tetrahydrofolate (THF) serving as the one-carbon carrier. This reaction serves as the major source of one-carbon groups required for the biosynthesis of purines, thymidylate, methionine, and other important biomolecules. Also exhibits THF-independent aldolase activity toward beta-hydroxyamino acids, producing glycine and aldehydes, via a retro-aldol mechanism. The protein is Serine hydroxymethyltransferase of Syntrophobacter fumaroxidans (strain DSM 10017 / MPOB).